The following is a 552-amino-acid chain: MAAKDLKFGNDARKKMLKGVNILANAVKVTLGPKGRNVVLDKSYGAPSITKDGVSVARDIELEDKFENMGAQMLKEVASKANDAAGDGTTTATVLAQSIVTEGLKAVAAGMNPMDLKRGIDKAVDAAVEELKKLSKPCKDSKEIAQVGTISANADEKVGTLISDAMKRVTNEGVITVEEASGLEDGLIVVEGMQFDRGYLSPYFINKQESSSIEFDNPYILLVDKKISNIRDMLSILEVVAKEGKPLLIIAEDVEGEALATLVVNTMRGIVKVAAVKAPGFGDRRKEMLQDIAVLTHGHVISEETGDSLEKATQENLGKAKRVVITKDATTIIDGAGEKSRIEARVQNIRKQIENATSDYDKEKLQERVAKLSGGVAVIKVGAPTEIAMKEKKARVEDALQATRAAVEEGVVPGGGVALIRVASKIANSSLKGDNEDQNVGIRVALRAMESPLRQIVVNAGEEASVIANKVKENKGNDNYGYNAQTEAYGDMIEMGILDPTKVTRSALQYAASIAGLMITTECMVTDLPKEEKASDMGSGGMGGMGGMNGMM.

Residues 30–33 (TLGP), Lys-51, 87–91 (DGTTT), Gly-415, and Asp-499 each bind ATP.

The protein belongs to the chaperonin (HSP60) family. In terms of assembly, forms a cylinder of 14 subunits composed of two heptameric rings stacked back-to-back. Interacts with the co-chaperonin GroES.

Its subcellular location is the cytoplasm. The enzyme catalyses ATP + H2O + a folded polypeptide = ADP + phosphate + an unfolded polypeptide.. Together with its co-chaperonin GroES, plays an essential role in assisting protein folding. The GroEL-GroES system forms a nano-cage that allows encapsulation of the non-native substrate proteins and provides a physical environment optimized to promote and accelerate protein folding. This Hamiltonella defensa subsp. Acyrthosiphon pisum (strain 5AT) protein is Chaperonin GroEL.